We begin with the raw amino-acid sequence, 194 residues long: Exopolysaccharide II synthesis transcriptional activator ExpG (194 aa).

The 136-residue stretch at 49-184 (YFELARVMER…AFQTLHRLEL (136 aa)) folds into the HTH marR-type domain.

Functionally, transcriptional activator of genes for galactoglucan synthesis (exopolysaccharide II or EPS II). The protein is Exopolysaccharide II synthesis transcriptional activator ExpG (expG) of Rhizobium meliloti (strain 1021) (Ensifer meliloti).